Consider the following 530-residue polypeptide: Probable NADH-specific resorcinol 4-hydroxylase (530 aa).

It carries out the reaction resorcinol + NADH + O2 + H(+) = benzene-1,2,4-triol + NAD(+) + H2O. Functionally, single-component hydroxylase that is part of the gamma-resorcylate (GRA) degradation pathway. GRA is initially converted by GRA decarboxylase to resorcinol, which is hydroxylated by resorcinol 4-hydroxylase. In Rhodococcus jostii (strain RHA1), this protein is Probable NADH-specific resorcinol 4-hydroxylase (tsdB).